The sequence spans 77 residues: MAVGTTTGELRELTDEELTDKLRESKEELFNLRFQMATGQLANNRRLRVVRQEIARLYTVLRERELGLAAGPGGEDS.

This sequence belongs to the universal ribosomal protein uL29 family.

The protein is Large ribosomal subunit protein uL29 of Mycolicibacterium vanbaalenii (strain DSM 7251 / JCM 13017 / BCRC 16820 / KCTC 9966 / NRRL B-24157 / PYR-1) (Mycobacterium vanbaalenii).